A 400-amino-acid polypeptide reads, in one-letter code: Acetate kinase (400 aa).

Asn-9 serves as a coordination point for Mg(2+). Lys-16 contacts ATP. Arg-90 contributes to the substrate binding site. Asp-147 (proton donor/acceptor) is an active-site residue. ATP-binding positions include 207-211, 282-284, and 330-334; these read HIGNG, DLR, and GIGEN. Glu-385 lines the Mg(2+) pocket.

It belongs to the acetokinase family. Homodimer. Mg(2+) is required as a cofactor. Mn(2+) serves as cofactor.

The protein localises to the cytoplasm. It carries out the reaction acetate + ATP = acetyl phosphate + ADP. It participates in metabolic intermediate biosynthesis; acetyl-CoA biosynthesis; acetyl-CoA from acetate: step 1/2. Catalyzes the formation of acetyl phosphate from acetate and ATP. Can also catalyze the reverse reaction. The sequence is that of Acetate kinase from Staphylococcus aureus (strain Mu3 / ATCC 700698).